Reading from the N-terminus, the 152-residue chain is Endoribonuclease YbeY (152 aa).

The Zn(2+) site is built by histidine 113, histidine 117, and histidine 123.

The protein belongs to the endoribonuclease YbeY family. It depends on Zn(2+) as a cofactor.

The protein resides in the cytoplasm. Functionally, single strand-specific metallo-endoribonuclease involved in late-stage 70S ribosome quality control and in maturation of the 3' terminus of the 16S rRNA. The polypeptide is Endoribonuclease YbeY (Janthinobacterium sp. (strain Marseille) (Minibacterium massiliensis)).